Reading from the N-terminus, the 212-residue chain is UDP-N-acetylglucosamine transferase subunit ALG13 (212 aa).

The protein belongs to the glycosyltransferase 28 family. As to quaternary structure, heterodimer with ALG14 to form a functional enzyme.

Its subcellular location is the endoplasmic reticulum. The enzyme catalyses an N-acetyl-alpha-D-glucosaminyl-diphospho-di-trans,poly-cis-dolichol + UDP-N-acetyl-alpha-D-glucosamine = an N,N'-diacetylchitobiosyl-diphospho-di-trans,poly-cis-dolichol + UDP + H(+). In terms of biological role, involved in protein N-glycosylation. Essential for the second step of the dolichol-linked oligosaccharide pathway. This chain is UDP-N-acetylglucosamine transferase subunit ALG13 (ALG13), found in Debaryomyces hansenii (strain ATCC 36239 / CBS 767 / BCRC 21394 / JCM 1990 / NBRC 0083 / IGC 2968) (Yeast).